Consider the following 162-residue polypeptide: 2-C-methyl-D-erythritol 2,4-cyclodiphosphate synthase (162 aa).

A divalent metal cation contacts are provided by aspartate 12 and histidine 14. 4-CDP-2-C-methyl-D-erythritol 2-phosphate contacts are provided by residues 12–14 (DVH) and 38–39 (HS). Histidine 46 provides a ligand contact to a divalent metal cation. Residues 60-62 (DIG), 65-69 (FPDTD), and arginine 146 contribute to the 4-CDP-2-C-methyl-D-erythritol 2-phosphate site.

This sequence belongs to the IspF family. In terms of assembly, homotrimer. It depends on a divalent metal cation as a cofactor.

It catalyses the reaction 4-CDP-2-C-methyl-D-erythritol 2-phosphate = 2-C-methyl-D-erythritol 2,4-cyclic diphosphate + CMP. The protein operates within isoprenoid biosynthesis; isopentenyl diphosphate biosynthesis via DXP pathway; isopentenyl diphosphate from 1-deoxy-D-xylulose 5-phosphate: step 4/6. In terms of biological role, involved in the biosynthesis of isopentenyl diphosphate (IPP) and dimethylallyl diphosphate (DMAPP), two major building blocks of isoprenoid compounds. Catalyzes the conversion of 4-diphosphocytidyl-2-C-methyl-D-erythritol 2-phosphate (CDP-ME2P) to 2-C-methyl-D-erythritol 2,4-cyclodiphosphate (ME-CPP) with a corresponding release of cytidine 5-monophosphate (CMP). The sequence is that of 2-C-methyl-D-erythritol 2,4-cyclodiphosphate synthase from Bordetella avium (strain 197N).